An 841-amino-acid polypeptide reads, in one-letter code: Envelope glycoprotein H (841 aa).

Residues 1–17 (MFALVLAVVILPLWTTA) form the signal peptide. N-linked (GlcNAc...) asparagine; by host glycosylation is found at asparagine 18, asparagine 45, and asparagine 217. Over 18–802 (NKSYVTPTPA…ERRQAIRMSG (785 aa)) the chain is Virion surface. The tract at residues 246–309 (DSGRVEVNIG…DPGPSYRVYL (64 aa)) is interaction with gL. Residues asparagine 317, asparagine 499, asparagine 522, asparagine 760, and asparagine 783 are each glycosylated (N-linked (GlcNAc...) asparagine; by host). A helical membrane pass occupies residues 803–823 (QYLGASLGGAFLAVVGFGIIG). The Intravirion segment spans residues 824 to 841 (WMLCGNSRLREYNKIPLT).

This sequence belongs to the herpesviridae glycoprotein H family. In terms of assembly, interacts with glycoprotein L (gL); this interaction is necessary for the correct processing and cell surface expression of gH. The heterodimer gH/gL seems to interact with gB trimers during fusion. Post-translationally, N-glycosylated, O-glycosylated, and sialylated.

It localises to the virion membrane. Its subcellular location is the host cell membrane. It is found in the host endosome membrane. The heterodimer glycoprotein H-glycoprotein L is required for the fusion of viral and plasma membranes leading to virus entry into the host cell. Following initial binding to host receptor, membrane fusion is mediated by the fusion machinery composed of gB and the heterodimer gH/gL. May also be involved in the fusion between the virion envelope and the outer nuclear membrane during virion morphogenesis. The sequence is that of Envelope glycoprotein H from Varicella-zoster virus (strain Oka vaccine) (HHV-3).